A 179-amino-acid polypeptide reads, in one-letter code: Protein HoxT (179 aa).

This Cupriavidus necator (strain ATCC 17699 / DSM 428 / KCTC 22496 / NCIMB 10442 / H16 / Stanier 337) (Ralstonia eutropha) protein is Protein HoxT (hoxT).